We begin with the raw amino-acid sequence, 281 residues long: 2-dehydro-3-deoxyphosphooctonate aldolase (281 aa).

Belongs to the KdsA family.

The protein resides in the cytoplasm. It carries out the reaction D-arabinose 5-phosphate + phosphoenolpyruvate + H2O = 3-deoxy-alpha-D-manno-2-octulosonate-8-phosphate + phosphate. It participates in carbohydrate biosynthesis; 3-deoxy-D-manno-octulosonate biosynthesis; 3-deoxy-D-manno-octulosonate from D-ribulose 5-phosphate: step 2/3. It functions in the pathway bacterial outer membrane biogenesis; lipopolysaccharide biosynthesis. This Pseudomonas fluorescens (strain SBW25) protein is 2-dehydro-3-deoxyphosphooctonate aldolase.